The following is a 172-amino-acid chain: Zinc finger protein 580 (172 aa).

Residues 1 to 93 (MLLLPPRPPH…GEPGPRKGYS (93 aa)) form a disordered region. The segment covering 19–30 (MDPPPPKAPPFP) has biased composition (pro residues). A Glycyl lysine isopeptide (Lys-Gly) (interchain with G-Cter in SUMO2) cross-link involves residue lysine 31. A compositionally biased stretch (low complexity) spans 31–44 (KAEGPSSTPSSAAG). Residues 75 to 86 (GPPQREAPPGEP) are compositionally biased toward pro residues. The C2H2-type 1 zinc finger occupies 92–114 (YSCPECARVFASPLRLQSHRVSH). A Glycyl lysine isopeptide (Lys-Gly) (interchain with G-Cter in SUMO2) cross-link involves residue lysine 118. 2 C2H2-type zinc fingers span residues 120–142 (FTCG…RATH) and 150–172 (HTCP…VRLH).

Interacts with SMAD2. As to expression, expressed in endothelial cells.

The protein localises to the nucleus. Its function is as follows. Involved in the regulation of endothelial cell proliferation and migration. Mediates H(2)O(2)-induced leukocyte chemotaxis by elevating interleukin-8 production and may play a role in inflammation. May be involved in transcriptional regulation. The protein is Zinc finger protein 580 (ZNF580) of Homo sapiens (Human).